A 338-amino-acid chain; its full sequence is Phenylalanine--tRNA ligase alpha subunit (338 aa).

Glutamate 252 is a binding site for Mg(2+).

The protein belongs to the class-II aminoacyl-tRNA synthetase family. Phe-tRNA synthetase alpha subunit type 1 subfamily. As to quaternary structure, tetramer of two alpha and two beta subunits. Mg(2+) is required as a cofactor.

It is found in the cytoplasm. It catalyses the reaction tRNA(Phe) + L-phenylalanine + ATP = L-phenylalanyl-tRNA(Phe) + AMP + diphosphate + H(+). The chain is Phenylalanine--tRNA ligase alpha subunit from Pseudomonas fluorescens (strain ATCC BAA-477 / NRRL B-23932 / Pf-5).